A 575-amino-acid polypeptide reads, in one-letter code: Flagellin B (575 aa).

This sequence belongs to the bacterial flagellin family. Heteromer of flaA and flaB.

It localises to the secreted. It is found in the bacterial flagellum. Its function is as follows. Flagellin is the subunit protein which polymerizes to form the filaments of bacterial flagella. This Campylobacter jejuni protein is Flagellin B (flaB).